Reading from the N-terminus, the 413-residue chain is Clamp protein VP6 (413 aa).

This sequence belongs to the reoviridae clamp protein family. In terms of assembly, interacts with capsid proteins VP3, VP4 and VP7.

The protein resides in the virion. Its function is as follows. Located at the interface of the incomplete T=13 outer capsid and the pseudo T=2 inner capsid, 120 VP6 subunits clamp and stabilize the inner capsid shell. The protein is Clamp protein VP6 (S8) of Ctenopharyngodon idella (Grass carp).